Here is a 146-residue protein sequence, read N- to C-terminus: Mitochondrial DnaJ homolog 2 (146 aa).

A J domain is found at 85 to 146 (EALLILDISA…LERSVLLRKR (62 aa)).

As to quaternary structure, interacts with PAM16/TIM16 and is recruited by the PAM complex.

Its subcellular location is the mitochondrion inner membrane. Its function is as follows. Plays a role in mitochondrial biogenesis and protein folding. Participates in the translocation of transit peptide-containing proteins from the inner membrane into the mitochondrial matrix in an ATP-dependent manner, probably by stimulating activity of mtHSP70 (SSC1). This chain is Mitochondrial DnaJ homolog 2 (MDJ2), found in Saccharomyces cerevisiae (strain ATCC 204508 / S288c) (Baker's yeast).